The following is a 334-amino-acid chain: AA9 family lytic polysaccharide monooxygenase A (334 aa).

The signal sequence occupies residues 1-22; it reads MSPSFKSTAILGAVALAARVRA. Cu(2+)-binding residues include His-23 and His-108. Intrachain disulfides connect Cys-78-Cys-200 and Cys-119-Cys-123. The N-linked (GlcNAc...) asparagine glycan is linked to Asn-160. Positions 186 and 195 each coordinate O2. Tyr-197 is a Cu(2+) binding site. The N-linked (GlcNAc...) asparagine glycan is linked to Asn-208. Residues 244-304 form a disordered region; that stretch reads GPALYTGGSS…PSPSLPVEIP (61 aa). The span at 249–265 shows a compositional bias: low complexity; sequence TGGSSPSPNPPTSTQSP.

This sequence belongs to the polysaccharide monooxygenase AA9 family. Cu(2+) is required as a cofactor.

It is found in the secreted. The enzyme catalyses [(1-&gt;4)-beta-D-glucosyl]n+m + reduced acceptor + O2 = 4-dehydro-beta-D-glucosyl-[(1-&gt;4)-beta-D-glucosyl]n-1 + [(1-&gt;4)-beta-D-glucosyl]m + acceptor + H2O.. In terms of biological role, lytic polysaccharide monooxygenase (LPMO) that depolymerizes crystalline and amorphous polysaccharides via the oxidation of scissile alpha- or beta-(1-4)-glycosidic bonds, yielding C1 or C4 oxidation products. Catalysis by LPMOs requires the reduction of the active-site copper from Cu(II) to Cu(I) by a reducing agent and H(2)O(2) or O(2) as a cosubstrate. Active on hemicelluloses, including xylan, glucomannan, and xyloglucan. Shows clear activity on cellooligosaccharides, generating C4 oxidation products. Also displays activity on konjac glucomannan (KGM), a linear beta-1,4-linked mannan with randomly distributed glucosyl residues; as well as trace activity on lichenan, a linear beta-1,3-beta-1,4-glucan with a 1:2 ratio of beta-1,3 to beta-1,4 linkages. Has no activity on ivory nut mannan (INM), a linear beta-1,4-linked mannan without substitutions. The sequence is that of AA9 family lytic polysaccharide monooxygenase A from Malbranchea cinnamomea (Thermophilic fungus).